A 930-amino-acid chain; its full sequence is Protocadherin gamma-B6 (930 aa).

The signal sequence occupies residues methionine 1 to serine 30. Cadherin domains follow at residues glutamate 31–phenylalanine 133, aspartate 134–phenylalanine 242, serine 243–isoleucine 347, isoleucine 348–phenylalanine 452, aspartate 453–valine 562, and aspartate 570–leucine 675. Over glutamate 31–tyrosine 691 the chain is Extracellular. Residues asparagine 304, asparagine 419, and asparagine 545 are each glycosylated (N-linked (GlcNAc...) asparagine). Residues leucine 692 to alanine 712 traverse the membrane as a helical segment. The Cytoplasmic segment spans residues leucine 713–lysine 930. Disordered regions lie at residues proline 791 to asparagine 839 and alanine 900 to lysine 930. The span at histidine 800–asparagine 839 shows a compositional bias: polar residues. Over residues asparagine 920 to lysine 930 the composition is skewed to basic residues.

It is found in the cell membrane. Functionally, potential calcium-dependent cell-adhesion protein. May be involved in the establishment and maintenance of specific neuronal connections in the brain. The chain is Protocadherin gamma-B6 (PCDHGB6) from Homo sapiens (Human).